The following is a 170-amino-acid chain: Protein GrpE (170 aa).

The interval 1–29 is disordered; the sequence is MSEEIKNEEIVEEVEATEEVVETPEKSEL. Residues 10–22 show a composition bias toward acidic residues; sequence IVEEVEATEEVVE.

This sequence belongs to the GrpE family. As to quaternary structure, homodimer.

The protein resides in the cytoplasm. Its function is as follows. Participates actively in the response to hyperosmotic and heat shock by preventing the aggregation of stress-denatured proteins, in association with DnaK and GrpE. It is the nucleotide exchange factor for DnaK and may function as a thermosensor. Unfolded proteins bind initially to DnaJ; upon interaction with the DnaJ-bound protein, DnaK hydrolyzes its bound ATP, resulting in the formation of a stable complex. GrpE releases ADP from DnaK; ATP binding to DnaK triggers the release of the substrate protein, thus completing the reaction cycle. Several rounds of ATP-dependent interactions between DnaJ, DnaK and GrpE are required for fully efficient folding. In Streptococcus suis (strain 98HAH33), this protein is Protein GrpE.